Reading from the N-terminus, the 434-residue chain is MSTKNEQLFLQAKKHIPGGVNSPVRAFAGVGGTPVFMHKAAGSKIYDTEDNEYIDYVGSWGPMILGHAHPKVIEAVKAAADDGLSFGTPTTFETSVADIICDIVPSVEMIRMTSSGTEATMSAIRLARGYTGRDKIVKFEGCYHGHSDSLLVKAGSGMLDIGEPTSQGVPADFAKHTITLPYNDPQAIKDCFEKWGDEIACVIVEPIAGNMNMIVPSQEFHDTLRAQCTQGGAVLIFDEVMTGFRVGLKGAQAHFGIEPDLICFGKIIGAGLPVGAFGGKREIMECIAPMGGVYQAGTLSGNPLAMRAGIAMFEDLTVEGFYEGVADKVTYLVEGIQAAAHKHGIKLRSTKLGGMFGLFFVKDEATGVPQNFDEVTACDMDKFNTFFHGMLDRGIYLAPSAYEVGFMSSKHTTEDLDATIKAADDVFAEMSAAS.

N6-(pyridoxal phosphate)lysine is present on Lys-266.

It belongs to the class-III pyridoxal-phosphate-dependent aminotransferase family. HemL subfamily. Homodimer. Pyridoxal 5'-phosphate is required as a cofactor.

Its subcellular location is the cytoplasm. It carries out the reaction (S)-4-amino-5-oxopentanoate = 5-aminolevulinate. It functions in the pathway porphyrin-containing compound metabolism; protoporphyrin-IX biosynthesis; 5-aminolevulinate from L-glutamyl-tRNA(Glu): step 2/2. This chain is Glutamate-1-semialdehyde 2,1-aminomutase, found in Psychrobacter sp. (strain PRwf-1).